Reading from the N-terminus, the 413-residue chain is Clamp protein VP6 (413 aa).

It belongs to the reoviridae clamp protein family. As to quaternary structure, interacts with capsid proteins VP3, VP4 and VP7.

It is found in the virion. Functionally, located at the interface of the incomplete T=13 outer capsid and the pseudo T=2 inner capsid, 120 VP6 subunits clamp and stabilize the inner capsid shell. This Ctenopharyngodon idella (Grass carp) protein is Clamp protein VP6 (S8).